The primary structure comprises 165 residues: Large ribosomal subunit protein uL15 (165 aa).

Positions 1-30 (MTNKKRRQRGSRTHGGGTHKNRRGAGHRGG) are enriched in basic residues. Disordered regions lie at residues 1 to 39 (MTNKKRRQRGSRTHGGGTHKNRRGAGHRGGRGAAGRAKH) and 137 to 165 (AGGEATLSERAEEAADESENTSDDEDDEA). Residues 150–165 (AADESENTSDDEDDEA) show a composition bias toward acidic residues.

The protein belongs to the universal ribosomal protein uL15 family. Part of the 50S ribosomal subunit.

Functionally, binds to the 23S rRNA. The chain is Large ribosomal subunit protein uL15 from Halorubrum lacusprofundi (strain ATCC 49239 / DSM 5036 / JCM 8891 / ACAM 34).